Consider the following 950-residue polypeptide: MAKQTNYAQPWSQFYGPNLGYVIEMYEQYLDDPNSIDPELKQLFEQWGAPVLEEPVSPADDETAKTHQTFRLPETPTIFSKLVAAVKLADSIRHYGHLVADTNPLVKKEKKLRRLELDEYDLTEEDLKRIPVAFLCPHAPAHVKNGWDAILHLRKIYTDKIAFEFSQVHNLEERNWLIQQIESGAYYPSLANKERVALLRRLTEVEGFEKFIHRTYVGQKRFSIEGLDSMVPLLDELVRQAIEHEIDAVNIGMAHRGRLNVLAHVLGKPYEMIFAEFQHAESKNFIPSEGSVAITYGWTGDVKYHLGAARRLRNQSAHTMRITLANNPSHLEVVNPVVLGYTRAAQEDRTKPGVPVQNTDASFAILIHGDAAFPGQGIVAETLNLSQLRGYTTGGTIHIIANNMIGFTTESYDSRSTTYASDMAKGFEVPIVHVNADDPEACLAAACLAFAYRQRFKKDFVIDLIGYRRFGHNEMDEPMATNPTMYAIINQHPTVRKLYAQKLMEKGIITEREVDEMEQEVAERLKIAYERVPKNEDELDFIMDPPKPVVDRLPEVKTSVAKDVLHRVNEELLQFPDGFNVFNKLERILKRRSGVFAQNGKVDWAHAEILAFATILQDGVPIRLTGQDSQRGTFAQRHLVLHDVKTGEEYVPLHHISGAKASFVVYNSPLTEAAVLGYEYGYNVYAPETLVLWEAQFGDFANMAQVMFDQFISSGRAKWGQKSGLVMLLPHGYEGQGPEHSSGRVERFLQLAAENNWTVANLSTAAQYFHILRRQAALLTREEVRPLIIMTPKSLLRHPLAASDAEVFVDGAFSPVLEQPGLGADAGKVERIVFGTGKLMIDLAEQIGKMESLDWLHIVRIEELYPFPEEAVKDIIARYPNVKELVWVQEEPKNMGAWLYMEPRLRALAPEGVDVSYIGRRRRASPAEGDPVVHRKEQERIIRCALTKHE.

It belongs to the alpha-ketoglutarate dehydrogenase family. Homodimer. Part of the 2-oxoglutarate dehydrogenase (OGDH) complex composed of E1 (2-oxoglutarate dehydrogenase), E2 (dihydrolipoamide succinyltransferase) and E3 (dihydrolipoamide dehydrogenase); the complex contains multiple copies of the three enzymatic components (E1, E2 and E3). The cofactor is thiamine diphosphate.

It carries out the reaction N(6)-[(R)-lipoyl]-L-lysyl-[protein] + 2-oxoglutarate + H(+) = N(6)-[(R)-S(8)-succinyldihydrolipoyl]-L-lysyl-[protein] + CO2. In terms of biological role, E1 component of the 2-oxoglutarate dehydrogenase (OGDH) complex which catalyzes the decarboxylation of 2-oxoglutarate, the first step in the conversion of 2-oxoglutarate to succinyl-CoA and CO(2). This is 2-oxoglutarate dehydrogenase E1 component from Geobacillus kaustophilus (strain HTA426).